A 218-amino-acid polypeptide reads, in one-letter code: MNRQKVIAIDGPGASGKGTVAARVAAALGYDYLDTGALYRLTALYAQKQGVGWHDEENVSELAKKLPAVFSGSRILLGGEDVSDGIRTEAIGMGASAVAQLPKVRAALLQRQRDFLTEKGLVADGRDTGSVVFPQAELKIFLTAESKIRAERRAKQIGIPCEGLAFERILSDIEARDEADRNRKVAPLKQQPDALLLDTSRLTIEETVKKVLDWYREV.

ATP is bound at residue 11–19; it reads GPGASGKGT.

Belongs to the cytidylate kinase family. Type 1 subfamily.

It localises to the cytoplasm. It carries out the reaction CMP + ATP = CDP + ADP. The catalysed reaction is dCMP + ATP = dCDP + ADP. This is Cytidylate kinase from Neisseria meningitidis serogroup B (strain ATCC BAA-335 / MC58).